The sequence spans 129 residues: Large ribosomal subunit protein bL20 (129 aa).

The protein belongs to the bacterial ribosomal protein bL20 family.

Its function is as follows. Binds directly to 23S ribosomal RNA and is necessary for the in vitro assembly process of the 50S ribosomal subunit. It is not involved in the protein synthesizing functions of that subunit. The protein is Large ribosomal subunit protein bL20 of Mycobacterium sp. (strain JLS).